We begin with the raw amino-acid sequence, 458 residues long: Mitochondrial distribution and morphology protein 10 (458 aa).

The interval 307–339 (LDQRRTEPLDAPNTNSSVFSKERVQKKQGPKED) is disordered. The span at 326–339 (SKERVQKKQGPKED) shows a compositional bias: basic and acidic residues.

It belongs to the MDM10 family. In terms of assembly, component of the ER-mitochondria encounter structure (ERMES) or MDM complex, composed of MMM1, MDM10, MDM12 and MDM34. Associates with the mitochondrial outer membrane sorting assembly machinery SAM(core) complex.

The protein localises to the mitochondrion outer membrane. Its function is as follows. Component of the ERMES/MDM complex, which serves as a molecular tether to connect the endoplasmic reticulum and mitochondria. Components of this complex are involved in the control of mitochondrial shape and protein biogenesis and may function in phospholipid exchange. MDM10 is involved in the late assembly steps of the general translocase of the mitochondrial outer membrane (TOM complex). Functions in the TOM40-specific route of the assembly of outer membrane beta-barrel proteins, including the association of TOM40 with the receptor TOM22 and small TOM proteins. Can associate with the SAM(core) complex as well as the MDM12-MMM1 complex, both involved in late steps of the major beta-barrel assembly pathway, that is responsible for biogenesis of all outer membrane beta-barrel proteins. May act as a switch that shuttles between both complexes and channels precursor proteins into the TOM40-specific pathway. Plays a role in mitochondrial morphology and in the inheritance of mitochondria. This is Mitochondrial distribution and morphology protein 10 from Lachancea thermotolerans (strain ATCC 56472 / CBS 6340 / NRRL Y-8284) (Yeast).